The chain runs to 174 residues: Chorismate pyruvate-lyase (174 aa).

Substrate contacts are provided by M36, R78, L116, and E157.

This sequence belongs to the UbiC family. As to quaternary structure, monomer.

It is found in the cytoplasm. It carries out the reaction chorismate = 4-hydroxybenzoate + pyruvate. The protein operates within cofactor biosynthesis; ubiquinone biosynthesis. Removes the pyruvyl group from chorismate, with concomitant aromatization of the ring, to provide 4-hydroxybenzoate (4HB) for the ubiquinone pathway. The sequence is that of Chorismate pyruvate-lyase from Yersinia pestis bv. Antiqua (strain Angola).